The sequence spans 75 residues: UPF0512 protein D (75 aa).

The disordered stretch occupies residues 1–20; it reads MAIFKSISSISNSTGSMGSS.

The protein belongs to the UPF0512 family.

The sequence is that of UPF0512 protein D from Dictyostelium discoideum (Social amoeba).